We begin with the raw amino-acid sequence, 810 residues long: AMP deaminase (810 aa).

Positions Met1–Asn10 are enriched in polar residues. Disordered stretches follow at residues Met1–Ser61 and Ala114–Leu137. Phosphoserine is present on residues Ser19, Ser58, and Ser61. Residues His125–Leu137 are compositionally biased toward polar residues. Residue Ser138 is modified to Phosphoserine. Positions 362 and 364 each coordinate Zn(2+). Residues His364 and Lys433–Tyr438 contribute to the substrate site. His630 contributes to the Zn(2+) binding site. Substrate is bound at residue Glu633. The active-site Proton acceptor is the His652. Asp707 lines the Zn(2+) pocket. Asp708–Gln711 is a substrate binding site.

The protein belongs to the metallo-dependent hydrolases superfamily. Adenosine and AMP deaminases family. As to quaternary structure, homotetramer. The cofactor is Zn(2+).

The enzyme catalyses AMP + H2O + H(+) = IMP + NH4(+). Its pathway is purine metabolism; IMP biosynthesis via salvage pathway; IMP from AMP: step 1/1. Its function is as follows. AMP deaminase plays a critical role in energy metabolism. This chain is AMP deaminase (AMD1), found in Saccharomyces cerevisiae (strain ATCC 204508 / S288c) (Baker's yeast).